Consider the following 672-residue polypeptide: MGIKGLIGFLSDAAPGCISEVTLESLSGTSIAIDASTALYQFTIAIREGSYLSSLTNSKGESTSHIAGLLNRCIRLLELGIRPVFVFDSTPPEAKSQTLAKRKLLREEAESSLEKAIEEDDKEAIRKYVGRTVRITQKENESAKKLLRLVGVPVIEAAEEAEAQCAYLCQRGFVTAVGSEDADALVFRCGVLLKNLTASNKPVVRVDLAKALELLELTHEQFTDFCILCGCDYCGTLKGVGPKTAYNLIKKHGSISRILEVRSETLEGYEAAQEYFRDPKVRDITTIDRCEANIDGLREFLISENDFSEERVDKLIERLQKARSKKTQLSLKSFFGYPPRAANITRNYTVPIKGVSPPAVVESAVDSTSDDGKDEVPSDDKVPSVNEVPTVDKVPSVNEVPTVEEAPPADAVPTVEDTSEPPSEEPDAKKRNKRVPIEVDDSLVPDNLKRFICVQHYDPRVTIKRTGASELGSDSVDSLVSHICGVYGIQSGTPDNDLSVVGEGILWPNPILQRFRSVTKDLPNSRLHELWRCSSSHGISWDALDKLYINFREARDSSVEEWDKYAPEIVDFASKVARDKITQWLDGSTSCPPRLLRRWTHLLYSRWRERYLHVYGPRMLSRYLKGEVTDRVLVREINECLPAGVECSELPLDTEPSEHNPHFVRRVPKSGS.

The tract at residues Met1–Arg106 is N-domain. Asp34 provides a ligand contact to Mg(2+). Positions 47 and 72 each coordinate DNA. Residues Asp88, Glu160, Glu162, Asp181, and Asp183 each contribute to the Mg(2+) site. Positions Ala124–His252 are I-domain. Residue Glu160 participates in DNA binding. The DNA site is built by Gly230 and Asp232. Mg(2+) is bound at residue Asp232. The interaction with PCNA stretch occupies residues Thr327–Phe335. The segment at Val361–Pro436 is disordered. A compositionally biased stretch (basic and acidic residues) spans Asp370–Val382.

It belongs to the XPG/RAD2 endonuclease family. FEN1 subfamily. As to quaternary structure, interacts with PCNA. Three molecules of FEN1 bind to one PCNA trimer with each molecule binding to one PCNA monomer. PCNA stimulates the nuclease activity without altering cleavage specificity. Requires Mg(2+) as cofactor. Post-translationally, phosphorylated. Phosphorylation upon DNA damage induces relocalization to the nuclear plasma.

It localises to the nucleus. Its subcellular location is the nucleolus. It is found in the nucleoplasm. The protein resides in the mitochondrion. Its function is as follows. Structure-specific nuclease with 5'-flap endonuclease and 5'-3' exonuclease activities involved in DNA replication and repair. During DNA replication, cleaves the 5'-overhanging flap structure that is generated by displacement synthesis when DNA polymerase encounters the 5'-end of a downstream Okazaki fragment. It enters the flap from the 5'-end and then tracks to cleave the flap base, leaving a nick for ligation. Also involved in the long patch base excision repair (LP-BER) pathway, by cleaving within the apurinic/apyrimidinic (AP) site-terminated flap. Acts as a genome stabilization factor that prevents flaps from equilibrating into structures that lead to duplications and deletions. Also possesses 5'-3' exonuclease activity on nicked or gapped double-stranded DNA, and exhibits RNase H activity. Also involved in replication and repair of rDNA and in repairing mitochondrial DNA. The protein is Flap endonuclease 1 of Babesia bovis.